We begin with the raw amino-acid sequence, 271 residues long: MSHLLRKPQANELSQGVKLVHEVKKSNSDLSYVEFKVLDLAPGSSYEESLSKQECCIVALTGKITATDHEQTFENIGTRESVFERKPTDSVYVSNDRKFGITAVTEARVALCYSPSENQLPTKLIKAEDNGIENRGKFSNKRTVHNILPDSDPSANSLLVVEVYTESGNWSSYPPHKHDQDNLPEESFLEETYYHELDPQQGFVFQRVYTDDRSIDETMTVENGNVVIVPAGYHPVGVPDGYTSYYLNVMAGPTRKWKFHNDPDHEWILER.

Belongs to the isomerase IolB family.

The catalysed reaction is 5-deoxy-D-glucuronate = 5-dehydro-2-deoxy-D-gluconate. It participates in polyol metabolism; myo-inositol degradation into acetyl-CoA; acetyl-CoA from myo-inositol: step 4/7. Involved in the isomerization of 5-deoxy-glucuronate (5DG) to 5-dehydro-2-deoxy-D-gluconate (DKG or 2-deoxy-5-keto-D-gluconate). This Bacillus licheniformis (strain ATCC 14580 / DSM 13 / JCM 2505 / CCUG 7422 / NBRC 12200 / NCIMB 9375 / NCTC 10341 / NRRL NRS-1264 / Gibson 46) protein is 5-deoxy-glucuronate isomerase.